Consider the following 428-residue polypeptide: Enolase (428 aa).

Residue glutamine 163 coordinates (2R)-2-phosphoglycerate. Glutamate 205 functions as the Proton donor in the catalytic mechanism. Residues aspartate 242, glutamate 286, and aspartate 313 each contribute to the Mg(2+) site. (2R)-2-phosphoglycerate contacts are provided by lysine 338, arginine 367, serine 368, and lysine 389. The active-site Proton acceptor is the lysine 338.

Belongs to the enolase family. Requires Mg(2+) as cofactor.

It localises to the cytoplasm. Its subcellular location is the secreted. The protein resides in the cell surface. It carries out the reaction (2R)-2-phosphoglycerate = phosphoenolpyruvate + H2O. It functions in the pathway carbohydrate degradation; glycolysis; pyruvate from D-glyceraldehyde 3-phosphate: step 4/5. In terms of biological role, catalyzes the reversible conversion of 2-phosphoglycerate (2-PG) into phosphoenolpyruvate (PEP). It is essential for the degradation of carbohydrates via glycolysis. This chain is Enolase, found in Geobacter sulfurreducens (strain ATCC 51573 / DSM 12127 / PCA).